Consider the following 689-residue polypeptide: DNA topoisomerase 1 (689 aa).

The Toprim domain maps to 3-113; it reads DNLVIVESPA…KENRVVFNEI (111 aa). Mg(2+)-binding residues include E9 and D82. The Topo IA-type catalytic domain maps to 129–557; that stretch reads EMNLVDAQQA…FFSSFKQDVE (429 aa). Positions 163 to 168 are interaction with DNA; sequence SAGRVQ. The active-site O-(5'-phospho-DNA)-tyrosine intermediate is Y298. The segment at 328-357 is disordered; it reads SKRKASGKQGDQDAHEAIRPSSTMRTPDDM. C4-type zinc fingers lie at residues 577–603, 617–645, and 658–681; these read CEVC…FPDC, CPKC…YPEC, and CPKC…CSNC.

This sequence belongs to the type IA topoisomerase family. Monomer. The cofactor is Mg(2+).

It catalyses the reaction ATP-independent breakage of single-stranded DNA, followed by passage and rejoining.. Releases the supercoiling and torsional tension of DNA, which is introduced during the DNA replication and transcription, by transiently cleaving and rejoining one strand of the DNA duplex. Introduces a single-strand break via transesterification at a target site in duplex DNA. The scissile phosphodiester is attacked by the catalytic tyrosine of the enzyme, resulting in the formation of a DNA-(5'-phosphotyrosyl)-enzyme intermediate and the expulsion of a 3'-OH DNA strand. The free DNA strand then undergoes passage around the unbroken strand, thus removing DNA supercoils. Finally, in the religation step, the DNA 3'-OH attacks the covalent intermediate to expel the active-site tyrosine and restore the DNA phosphodiester backbone. In Staphylococcus aureus (strain N315), this protein is DNA topoisomerase 1.